A 127-amino-acid polypeptide reads, in one-letter code: Protein ApaG (127 aa).

Positions 3 to 127 (KSETYRIEVE…FMLAMPRVLH (125 aa)) constitute an ApaG domain.

This chain is Protein ApaG, found in Azoarcus sp. (strain BH72).